The sequence spans 240 residues: Small ribosomal subunit protein uS3 (240 aa).

Positions 39 to 107 (IRDFIKKEAK…ELHLNIVEVR (69 aa)) constitute a KH type-2 domain. Composition is skewed to basic and acidic residues over residues 212–221 (PQARDRRATE) and 231–240 (PRRDRDRDAR). The interval 212–240 (PQARDRRATEAQDGPSPRGPRRDRDRDAR) is disordered.

The protein belongs to the universal ribosomal protein uS3 family. As to quaternary structure, part of the 30S ribosomal subunit. Forms a tight complex with proteins S10 and S14.

In terms of biological role, binds the lower part of the 30S subunit head. Binds mRNA in the 70S ribosome, positioning it for translation. This chain is Small ribosomal subunit protein uS3, found in Paracoccus denitrificans (strain Pd 1222).